Here is a 77-residue protein sequence, read N- to C-terminus: uncharacterized protein (77 aa).

Residues Met-1–Lys-15 show a composition bias toward polar residues. Disordered regions lie at residues Met-1–Trp-20 and Thr-31–Phe-52. Over residues Ser-33–Asp-44 the composition is skewed to acidic residues.

This is an uncharacterized protein from Schizosaccharomyces pombe (strain 972 / ATCC 24843) (Fission yeast).